Reading from the N-terminus, the 392-residue chain is Phosphoglycerate kinase (392 aa).

Residues 21–23 (DFN), arginine 36, 59–62 (HLGR), arginine 118, and arginine 151 each bind substrate. Residues lysine 201, glycine 292, glutamate 323, and 349-352 (GGDS) contribute to the ATP site.

Belongs to the phosphoglycerate kinase family. In terms of assembly, monomer.

It localises to the cytoplasm. The enzyme catalyses (2R)-3-phosphoglycerate + ATP = (2R)-3-phospho-glyceroyl phosphate + ADP. It participates in carbohydrate degradation; glycolysis; pyruvate from D-glyceraldehyde 3-phosphate: step 2/5. The chain is Phosphoglycerate kinase from Borrelia duttonii (strain Ly).